We begin with the raw amino-acid sequence, 434 residues long: UDP-N-acetylmuramoylalanine--D-glutamate ligase (434 aa).

117–123 contacts ATP; sequence GTNGKST.

The protein belongs to the MurCDEF family.

The protein resides in the cytoplasm. It carries out the reaction UDP-N-acetyl-alpha-D-muramoyl-L-alanine + D-glutamate + ATP = UDP-N-acetyl-alpha-D-muramoyl-L-alanyl-D-glutamate + ADP + phosphate + H(+). It functions in the pathway cell wall biogenesis; peptidoglycan biosynthesis. In terms of biological role, cell wall formation. Catalyzes the addition of glutamate to the nucleotide precursor UDP-N-acetylmuramoyl-L-alanine (UMA). The polypeptide is UDP-N-acetylmuramoylalanine--D-glutamate ligase (Sphingopyxis alaskensis (strain DSM 13593 / LMG 18877 / RB2256) (Sphingomonas alaskensis)).